A 394-amino-acid chain; its full sequence is uncharacterized protein (394 aa).

Phosphoserine is present on residues Ser117 and Ser121. 3 disordered regions span residues 177 to 295, 315 to 347, and 370 to 394; these read DSDE…PGTF, KRSI…GSLS, and SSEV…AHRV. Over residues 178–190 the composition is skewed to acidic residues; the sequence is SDEEDEVDDEEIE. Composition is skewed to polar residues over residues 191-207 and 216-230; these read SFNS…NSRY and EKQS…VSQI. 2 stretches are compositionally biased toward acidic residues: residues 231–263 and 284–295; these read SDDE…DDED and IPDDTDFVPGTF. Polar residues predominate over residues 370–379; it reads SSEVLRNSKS. Phosphoserine is present on Ser379.

The protein localises to the nucleus. This is an uncharacterized protein from Schizosaccharomyces pombe (strain 972 / ATCC 24843) (Fission yeast).